The following is a 413-amino-acid chain: uncharacterized protein (413 aa).

Transmembrane regions (helical) follow at residues 42–62 (FLGG…LPVF), 75–95 (LSLS…GPLS), 109–129 (LIAA…VIVF), 133–153 (LTGL…VEEV), 157–179 (SVSF…GRIL), 191–211 (IAFI…LYFL), 238–258 (PTLL…ITIF), 265–285 (LMLS…IIYL), 304–324 (SSIL…TQYN), 326–346 (IFII…SHSI), 362–382 (ATSL…TFGG), and 383–403 (FFWF…ILIF).

It belongs to the major facilitator superfamily.

It localises to the cell membrane. This is an uncharacterized protein from Buchnera aphidicola subsp. Schizaphis graminum (strain Sg).